A 467-amino-acid chain; its full sequence is 3-isopropylmalate dehydratase large subunit (467 aa).

Cysteine 348, cysteine 409, and cysteine 412 together coordinate [4Fe-4S] cluster. The segment at 423–448 (NERSISTSNRNFEGRQGKGSRTHLAS) is disordered.

Belongs to the aconitase/IPM isomerase family. LeuC type 1 subfamily. As to quaternary structure, heterodimer of LeuC and LeuD. It depends on [4Fe-4S] cluster as a cofactor.

The catalysed reaction is (2R,3S)-3-isopropylmalate = (2S)-2-isopropylmalate. The protein operates within amino-acid biosynthesis; L-leucine biosynthesis; L-leucine from 3-methyl-2-oxobutanoate: step 2/4. Its function is as follows. Catalyzes the isomerization between 2-isopropylmalate and 3-isopropylmalate, via the formation of 2-isopropylmaleate. This is 3-isopropylmalate dehydratase large subunit from Bifidobacterium longum (strain DJO10A).